We begin with the raw amino-acid sequence, 134 residues long: Profilin-3 (134 aa).

Cys13 and Cys118 are oxidised to a cystine. An Involved in PIP2 interaction motif is present at residues Ala84–Thr100. Thr114 carries the phosphothreonine modification.

It belongs to the profilin family. In terms of assembly, occurs in many kinds of cells as a complex with monomeric actin in a 1:1 ratio. Phosphorylated by MAP kinases.

The protein resides in the cytoplasm. It is found in the cytoskeleton. Binds to actin and affects the structure of the cytoskeleton. At high concentrations, profilin prevents the polymerization of actin, whereas it enhances it at low concentrations. By binding to PIP2, it inhibits the formation of IP3 and DG. The protein is Profilin-3 (PRO3) of Olea europaea (Common olive).